Here is a 277-residue protein sequence, read N- to C-terminus: Large ribosomal subunit protein uL2 (277 aa).

Residues 219-277 form a disordered region; the sequence is TVRGSVMNPNDHPHGGGEGRSPIGHPSPRTPWGKPALGYKTRKNKKYSDRFIVKRRHDK.

This sequence belongs to the universal ribosomal protein uL2 family. Part of the 50S ribosomal subunit. Forms a bridge to the 30S subunit in the 70S ribosome.

Its function is as follows. One of the primary rRNA binding proteins. Required for association of the 30S and 50S subunits to form the 70S ribosome, for tRNA binding and peptide bond formation. It has been suggested to have peptidyltransferase activity; this is somewhat controversial. Makes several contacts with the 16S rRNA in the 70S ribosome. This Clostridium botulinum (strain ATCC 19397 / Type A) protein is Large ribosomal subunit protein uL2.